The primary structure comprises 336 residues: Dihydroorotate dehydrogenase (quinone) (336 aa).

FMN contacts are provided by residues 62–66 and Thr86; that span reads AGLDK. Lys66 provides a ligand contact to substrate. 111 to 115 contacts substrate; that stretch reads NRMGF. The FMN site is built by Asn139 and Asn172. Asn172 contacts substrate. Residue Ser175 is the Nucleophile of the active site. Residue Asn177 coordinates substrate. FMN contacts are provided by Lys217 and Thr245. 246–247 is a binding site for substrate; the sequence is NT. Residues Gly268, Gly297, and 318 to 319 each bind FMN; that span reads FS.

It belongs to the dihydroorotate dehydrogenase family. Type 2 subfamily. As to quaternary structure, monomer. It depends on FMN as a cofactor.

It localises to the cell membrane. The catalysed reaction is (S)-dihydroorotate + a quinone = orotate + a quinol. The protein operates within pyrimidine metabolism; UMP biosynthesis via de novo pathway; orotate from (S)-dihydroorotate (quinone route): step 1/1. Its function is as follows. Catalyzes the conversion of dihydroorotate to orotate with quinone as electron acceptor. The sequence is that of Dihydroorotate dehydrogenase (quinone) from Photorhabdus laumondii subsp. laumondii (strain DSM 15139 / CIP 105565 / TT01) (Photorhabdus luminescens subsp. laumondii).